A 127-amino-acid polypeptide reads, in one-letter code: Major sperm protein 49 (127 aa).

Ala2 is modified (N-acetylalanine). Residues 9–126 enclose the MSP domain; the sequence is DIQTQPGTKI…RRKNLPIEYN (118 aa).

As to expression, sperm.

It is found in the cell projection. Its subcellular location is the pseudopodium. The protein localises to the cytoplasm. It localises to the cytoskeleton. In terms of biological role, central component in molecular interactions underlying sperm crawling. Forms an extensive filament system that extends from sperm villipoda, along the leading edge of the pseudopod. The protein is Major sperm protein 49 (msp-49) of Caenorhabditis elegans.